A 551-amino-acid chain; its full sequence is E3 ubiquitin-protein ligase TRIM8 (551 aa).

The RING-type zinc finger occupies 15–56; it reads CPICLHVFVEPVQLPCKHNFCRGCIGEAWAKDSGLVRCPECN. B box-type zinc fingers lie at residues 92–132 and 140–182; these read CVFC…ARGH and VRAW…VCDV. Positions 181-249 form a coiled coil; sequence DVEIRRNEIR…HQLLDEDLRQ (69 aa).

It belongs to the TRIM/RBCC family. As to quaternary structure, homodimer. Interacts with SOCS1 (via) SH2 domain and SOCS box. Interacts with HSP90AB1; prevents nucleus translocation of phosphorylated STAT3 and HSP90AB1. Interacts with MAP3K7/TAK1. Interacts with PIAS3. Interacts with TICAM1. Interacts with TRIM15; this interaction prevents TRIM8 cytoplasmic translocation. As to expression, widely expressed. Expressed in glomerular podocytes of kidneys.

The protein resides in the cytoplasm. The protein localises to the nucleus. It localises to the nuclear body. The enzyme catalyses S-ubiquitinyl-[E2 ubiquitin-conjugating enzyme]-L-cysteine + [acceptor protein]-L-lysine = [E2 ubiquitin-conjugating enzyme]-L-cysteine + N(6)-ubiquitinyl-[acceptor protein]-L-lysine.. The protein operates within protein modification; protein ubiquitination. Its function is as follows. E3 ubiquitin-protein ligase that participates in multiple biological processes including cell survival, differentiation, apoptosis, and in particular, the innate immune response. Participates in the activation of interferon-gamma signaling by promoting proteasomal degradation of the repressor SOCS1. Plays a positive role in the TNFalpha and IL-1beta signaling pathways. Mechanistically, induces the 'Lys-63'-linked polyubiquitination of MAP3K7/TAK1 component leading to the activation of NF-kappa-B. Also modulates STAT3 activity through negative regulation of PIAS3, either by degradation of PIAS3 through the ubiquitin-proteasome pathway or exclusion of PIAS3 from the nucleus. Negatively regulates TLR3/4-mediated innate immune response by catalyzing 'Lys-6'- and 'Lys-33'-linked polyubiquitination of TICAM1 and thereby disrupting the TICAM1-TBK1 interaction. The polypeptide is E3 ubiquitin-protein ligase TRIM8 (TRIM8) (Homo sapiens (Human)).